The chain runs to 737 residues: SANT and BTB domain regulator of class switch recombination (737 aa).

The SANT domain maps to 21–59 (DMILYPLIGIPQTINWETVARLVPGLTPKECVKRFDELK). Residues 147–255 (MVIHVCDEAK…QCIQYCHKNM (109 aa)) enclose the BTB domain. A compositionally biased stretch (acidic residues) spans 555–576 (SEEEEYTTGSEVTEDEVGDEEE). The tract at residues 555–618 (SEEEEYTTGS…TLEKSTSRDV (64 aa)) is disordered. Residues 580–595 (KQRKKEKPKKFTKPPK) are compositionally biased toward basic residues. Basic and acidic residues predominate over residues 604–615 (QKKEKTLEKSTS).

This sequence belongs to the KIAA1841 family. Homodimer. Interacts (via the BTB domain) with HDAC1 and NCOR2.

In terms of biological role, negatively regulates class switch recombination or isotype switching in splenic B-cells. This chain is SANT and BTB domain regulator of class switch recombination, found in Rattus norvegicus (Rat).